A 669-amino-acid polypeptide reads, in one-letter code: GTP-binding protein 1 (669 aa).

The disordered stretch occupies residues 1–32; that stretch reads MAAERSRSPVDSPVPASMFAPEPSSPGAARAA. Residues Ser6, Ser8, Ser12, Ser24, Ser25, Ser44, Ser47, and Ser69 each carry the phosphoserine modification. Residues 158-389 enclose the tr-type G domain; the sequence is FLEVRVAVVG…LNLLSPRTSY (232 aa). The segment at 167 to 174 is G1; sequence GNVDAGKS. 167 to 174 lines the GTP pocket; that stretch reads GNVDAGKS. The interval 206–210 is G2; sequence GRTSS. Residues 252–255 form a G3 region; that stretch reads DLAG. Residues 252–256 and 308–311 contribute to the GTP site; these read DLAGH and TKID. The segment at 308–311 is G4; that stretch reads TKID. The tract at residues 366–368 is G5; the sequence is SNV. Polar residues-rich tracts occupy residues 573–595 and 620–637; these read LLQT…QSTK and DEAS…SGLQ. The tract at residues 573–669 is disordered; that stretch reads LLQTTNNSPM…GACVTPASGC (97 aa). Ser580 is modified (phosphoserine). A compositionally biased stretch (basic residues) spans 646-657; the sequence is GRRRGGQRHKVK.

This sequence belongs to the TRAFAC class translation factor GTPase superfamily. Classic translation factor GTPase family. GTPBP1 subfamily. In terms of assembly, interacts with EXOSC2/RRP4, EXOSC3/RRP40, EXOSC5/RRP46, HNRNPD, HNRNPR and SYNCRIP. Identified in a complex with HNRNPD, HNRNPL, HNRNPQ, HNRNPR, HNRNPU and AANAT mRNA, but does not bind mRNA by itself. As to expression, detected in pineal gland (at protein level).

Its subcellular location is the cytoplasm. Promotes degradation of target mRNA species. Plays a role in the regulation of circadian mRNA stability. Binds GTP and has GTPase activity. The sequence is that of GTP-binding protein 1 (Gtpbp1) from Rattus norvegicus (Rat).